Consider the following 572-residue polypeptide: Urease subunit alpha (572 aa).

Residues 134–572 (GGIDSHIHFI…LPMTQRYFLF (439 aa)) enclose the Urease domain. Residues His139, His141, and Lys222 each coordinate Ni(2+). Residue Lys222 is modified to N6-carboxylysine. Substrate is bound at residue His224. Residues His251 and His277 each coordinate Ni(2+). The active-site Proton donor is His325. Asp365 serves as a coordination point for Ni(2+).

This sequence belongs to the metallo-dependent hydrolases superfamily. Urease alpha subunit family. Heterotrimer of UreA (gamma), UreB (beta) and UreC (alpha) subunits. Three heterotrimers associate to form the active enzyme. It depends on Ni cation as a cofactor. Carboxylation allows a single lysine to coordinate two nickel ions.

It localises to the cytoplasm. The catalysed reaction is urea + 2 H2O + H(+) = hydrogencarbonate + 2 NH4(+). It participates in nitrogen metabolism; urea degradation; CO(2) and NH(3) from urea (urease route): step 1/1. The sequence is that of Urease subunit alpha from Polaromonas sp. (strain JS666 / ATCC BAA-500).